Consider the following 452-residue polypeptide: Bifunctional purine biosynthesis protein PurH (452 aa).

Positions 1–115 (MKRILVSLYE…KNWKKVKPAF (115 aa)) constitute an MGS-like domain.

The protein belongs to the PurH family.

The catalysed reaction is (6R)-10-formyltetrahydrofolate + 5-amino-1-(5-phospho-beta-D-ribosyl)imidazole-4-carboxamide = 5-formamido-1-(5-phospho-D-ribosyl)imidazole-4-carboxamide + (6S)-5,6,7,8-tetrahydrofolate. The enzyme catalyses IMP + H2O = 5-formamido-1-(5-phospho-D-ribosyl)imidazole-4-carboxamide. Its pathway is purine metabolism; IMP biosynthesis via de novo pathway; 5-formamido-1-(5-phospho-D-ribosyl)imidazole-4-carboxamide from 5-amino-1-(5-phospho-D-ribosyl)imidazole-4-carboxamide (10-formyl THF route): step 1/1. It participates in purine metabolism; IMP biosynthesis via de novo pathway; IMP from 5-formamido-1-(5-phospho-D-ribosyl)imidazole-4-carboxamide: step 1/1. This Thermotoga maritima (strain ATCC 43589 / DSM 3109 / JCM 10099 / NBRC 100826 / MSB8) protein is Bifunctional purine biosynthesis protein PurH.